Reading from the N-terminus, the 247-residue chain is Virulence plasmid protein pGP6-D (247 aa).

This sequence belongs to the UPF0137 (pGP6-D) family.

In Chlamydia trachomatis, this protein is Virulence plasmid protein pGP6-D.